Reading from the N-terminus, the 137-residue chain is Phosphoinositide-interacting protein (137 aa).

The next 2 helical transmembrane spans lie at 56-76 (IVIM…TCLA) and 94-114 (PGFL…VPII).

As to quaternary structure, interacts with TRPV1.

The protein localises to the membrane. In terms of biological role, regulatory subunit of TRPV1, a molecular sensor of noxious heat and capsaicin. Positively regulates TRPV1 channel activity via phosphatidylinositol 4,5-bisphosphate (PIP2). Binds various phosphoinositide, including phosphatidylinositol 4,5-bisphosphate (PIP2), but not phosphatidylinositol (PI). This Homo sapiens (Human) protein is Phosphoinositide-interacting protein (PIRT).